Consider the following 1420-residue polypeptide: MLLPSDVARLVLGYLQQENLTSTCQTFILESSNLKEYAEHCTDEGFIPACLLSLFGKNLTTILNEYVAMKAKETSNDVPTIMSSLWKKLDHTLSQIRSMHSSPGFAAHQRARTRNGIAEIKRQRWLASQAAPVSSELLVLPYASGQFTTSPLVATQAVKPTGPISTPVRSNIVVVNQSQPQSTVTNTAGESLNIIPGPQERKTQTSLMSPGRRKSESQKKSLTSSGPHSSRNFQDPNAFAVEKQMVIENAREKILSNKSLQEKLAENINKFLTSDSSVAQVPKQTDSNPTEPETSIDELLGLPSEIHMSEEAIQDILEQTESDPAFQALFDLFDYGKTKNNKNMPQISSQPMETNSNIVLPEETNLTIKSSFETEESDGQSGQPPFCTSYQNEDVLLNDLKSGNSHDVLPQESQENFSQISSNIQKKTFKTAIPAEQKCALDITLESVSNLSDFNQRGSSAECNEHCSELFASQIPTEAEVAVGEKNSLSADILSQSQYQPDQPSVPVTSFVSLGGETNDKNLVLSGKNSQLLSQSTPLTTKPSKSQLCENSNNIIKVKTNPQASESADSSETANRKTETNTVSPAAAQPQADCQDNSPLQSKPPPGIGESLGVNVTEKIEIHLEEPAPSDKQLSNDAASVDLNPTESKTEPLQSASAQEPEPPSVKDGDTIFLSLSEHNSCEEVALVLGEGNPVKNNNSLSSESGGSVGVSPETQNTDGKTSNSTEVDASSIVSLKIIISDDPFVSSDAELNSAVSSISGENLPTIILSSKSPAKNAEFVTCLSSEETASAVVSVEVGDSGSMEQNLLVLKPEEPMVNNTQNEDGIAFSANVAPCVPKDGGYIQLMPTTSTAFGNSSNILIATCMTDSTALGPTVSQSNVVVLPGSSAPMTAQPPQQQLQTPPKSNSAFAVSQAVSPNFSQGSAIIIASPVQPVLQGMVGMIPVSVVGQNGNTFSTPPQQVLHMPLAAPVCNRSIAQLPIPQKSQKAQGLRNKLITGKQVNNLTNLSSLSEACHTQRTEASDKNIATELGKKMEDTTISLSGERVAPPSKPFESHRRVLCFDSTVSSVANTQGSLYKMTSENKEKKEASFSHLDSPILSSTLKPPPNNAIKREREKTVPKILSKSETASSRHTTVKEVQSEKKVSPTEVALESLHKATANKENELCGDGERPKNADTSKLPGGQQNGSLRNEKAIASLQELTKKQATPSNNKNATSVGGTVKDQKQEQSKPASSLIGAEILQDVPIHSPANRSADTDLPVPRTPGSGAGEKHKEEPSDSMKAPASRRCGEEGSMPRVMIPPVTADLPACSPASETGSENSVSMAAHTLMILSRAAIARTTATPLKDNTQQFRTSSRSTTKKRKIEELDECERNSRTSGKNLANSSVPMKKKKIKKKKLPSSFPAGMDVDKFLLSLHYDE.

The tract at residues 1-319 is interaction with MIZF; it reads MLLPSDVARL…EEAIQDILEQ (319 aa). Residues 3 to 35 enclose the LisH domain; that stretch reads LPSDVARLVLGYLQQENLTSTCQTFILESSNLK. Required for activation of histone gene transcription and interaction with MIZF stretches follow at residues 5 to 25 and 121 to 145; these read SDVA…STCQ and KRQR…YASG. Positions 179-190 are enriched in polar residues; it reads QPQSTVTNTAGE. The interval 179 to 236 is disordered; that stretch reads QPQSTVTNTAGESLNIIPGPQERKTQTSLMSPGRRKSESQKKSLTSSGPHSSRNFQDP. S209 bears the Phosphoserine mark. The span at 220–235 shows a compositional bias: polar residues; sequence KSLTSSGPHSSRNFQD. The segment at 263–339 is mediates transcriptional activation; the sequence is KLAENINKFL…FDLFDYGKTK (77 aa). Polar residues predominate over residues 534–573; that stretch reads SQSTPLTTKPSKSQLCENSNNIIKVKTNPQASESADSSET. Disordered regions lie at residues 534–612, 625–670, and 696–727; these read SQST…GESL, EEPA…KDGD, and KNNN…NSTE. Residues S552 and S598 each carry the phosphoserine modification. The tract at residues 628 to 652 is required for acceleration of G1 phase; that stretch reads APSDKQLSNDAASVDLNPTESKTEP. Polar residues predominate over residues 632–658; the sequence is KQLSNDAASVDLNPTESKTEPLQSASA. A compositionally biased stretch (low complexity) spans 697–712; it reads NNNSLSSESGGSVGVS. The segment covering 713-727 has biased composition (polar residues); it reads PETQNTDGKTSNSTE. Phosphoserine; by CDK2 occurs at positions 771 and 773. Required for acceleration of G1 phase stretches follow at residues 822–847 and 1033–1048; these read QNED…IQLM and KMED…RVAP. Disordered regions lie at residues 1089–1190, 1202–1234, and 1249–1297; these read ASFS…NGSL, LTKK…KPAS, and SPAN…SMPR. S1096 carries the phosphoserine; by CDK2 modification. Glycyl lysine isopeptide (Lys-Gly) (interchain with G-Cter in SUMO2) cross-links involve residues K1112 and K1144. Basic and acidic residues-rich tracts occupy residues 1135–1146 and 1154–1177; these read TVKEVQSEKKVS and SLHK…KNAD. S1146 carries the phosphoserine modification. The span at 1205–1219 shows a compositional bias: polar residues; the sequence is KQATPSNNKNATSVG. K1223 carries the post-translational modification N6-acetyllysine. The interval 1223–1247 is required for acceleration of G1 phase; that stretch reads KDQKQEQSKPASSLIGAEILQDVPI. The residue at position 1249 (S1249) is a Phosphoserine. A Phosphothreonine; by CDK2 modification is found at T1264. Over residues 1270–1279 the composition is skewed to basic and acidic residues; it reads GEKHKEEPSD. K1274 is covalently cross-linked (Glycyl lysine isopeptide (Lys-Gly) (interchain with G-Cter in SUMO2)). The interval 1319-1342 is required for acceleration of G1 phase; that stretch reads ENSVSMAAHTLMILSRAAIARTTA. T1343 carries the post-translational modification Phosphothreonine; by CDK2. Residues 1348 to 1400 are disordered; the sequence is NTQQFRTSSRSTTKKRKIEELDECERNSRTSGKNLANSSVPMKKKKIKKKKLP. Over residues 1376–1387 the composition is skewed to polar residues; it reads RTSGKNLANSSV. Residues 1389–1399 show a composition bias toward basic residues; the sequence is MKKKKIKKKKL.

Belongs to the NPAT family. As to quaternary structure, interacts with the cylin/CDK complexes CCNE1/CDK2 and CCNA1/CDK2. Interacts with BZW1, CASP8AP2, CREBBP, MIZF and YY1. Interacts with the RUVBL1, RUVBL2 and TRRAP subunits of the NuA4 complex. May also interact with GAPDH, NME1, NME2 and STIP1. Phosphorylated at Ser-771, Ser-773, Ser-1096, Thr-1264 and Thr-1343 by CCNE1/CDK2 at G1-S transition and until prophase, which promotes association with histone gene clusters and stimulates activation of histone transcription. Also phosphorylated by CCNA1/CDK2 in vitro.

It is found in the nucleus. Required for progression through the G1 and S phases of the cell cycle and for S phase entry. Activates transcription of the histone H2A, histone H2B, histone H3 and histone H4 genes in conjunction with MIZF. Also positively regulates the ATM, MIZF and PRKDC promoters. Transcriptional activation may be accomplished at least in part by the recruitment of the NuA4 histone acetyltransferase (HAT) complex to target gene promoters. Required for early embryonic development. In Mus musculus (Mouse), this protein is Protein NPAT (Npat).